The following is a 1017-amino-acid chain: Integrator complex subunit 3 (1017 aa).

A disordered region spans residues 952–1017 (EYEDSSKPPK…KGSAVGSDSD (66 aa)). Residues 983-997 (NEEESVSSSASEEED) show a composition bias toward acidic residues.

This sequence belongs to the Integrator subunit 3 family. Component of the Integrator complex, composed of core subunits INTS1, INTS2, INTS3, INTS4, INTS5, INTS6, INTS7, INTS8, INTS9/RC74, INTS10, INTS11/CPSF3L, INTS12, INTS13, INTS14 and INTS15. The core complex associates with protein phosphatase 2A subunits PPP2CA and PPP2R1A, to form the Integrator-PP2A (INTAC) complex. Component of the SOSS complex.

It is found in the nucleus. The protein resides in the cytoplasm. Component of the integrator complex, a multiprotein complex that terminates RNA polymerase II (Pol II) transcription in the promoter-proximal region of genes. The integrator complex provides a quality checkpoint during transcription elongation by driving premature transcription termination of transcripts that are unfavorably configured for transcriptional elongation: the complex terminates transcription by (1) catalyzing dephosphorylation of the C-terminal domain (CTD) of Pol II subunit POLR2A/RPB1 and SUPT5H/SPT5, (2) degrading the exiting nascent RNA transcript via endonuclease activity and (3) promoting the release of Pol II from bound DNA. The integrator complex is also involved in terminating the synthesis of non-coding Pol II transcripts, such as enhancer RNAs (eRNAs), small nuclear RNAs (snRNAs), telomerase RNAs and long non-coding RNAs (lncRNAs). Within the integrator complex, INTS3 is involved in the post-termination step: INTS3 binds INTS7 in the open conformation of integrator complex and prevents the rebinding of Pol II to the integrator after termination cycle. Its function is as follows. Component of the SOSS complex, a multiprotein complex that functions downstream of the MRN complex to promote DNA repair and G2/M checkpoint. The SOSS complex associates with single-stranded DNA at DNA lesions and influences diverse endpoints in the cellular DNA damage response including cell-cycle checkpoint activation, recombinational repair and maintenance of genomic stability. The SOSS complex is required for efficient homologous recombination-dependent repair of double-strand breaks (DSBs) and ATM-dependent signaling pathways. In the SOSS complex, it is required for the assembly of the complex and for stabilization of the complex at DNA damage sites. The sequence is that of Integrator complex subunit 3 (ints3) from Danio rerio (Zebrafish).